The primary structure comprises 152 residues: Protein Smg homolog (152 aa).

Belongs to the Smg family.

The chain is Protein Smg homolog from Chromobacterium violaceum (strain ATCC 12472 / DSM 30191 / JCM 1249 / CCUG 213 / NBRC 12614 / NCIMB 9131 / NCTC 9757 / MK).